The primary structure comprises 316 residues: Lipoyl synthase (316 aa).

Positions 66, 71, 77, 92, 96, 99, and 306 each coordinate [4Fe-4S] cluster. The Radical SAM core domain occupies 78–295; it reads YSQQTATFMV…ADIAKSMGFK (218 aa).

The protein belongs to the radical SAM superfamily. Lipoyl synthase family. The cofactor is [4Fe-4S] cluster.

The protein resides in the cytoplasm. It catalyses the reaction [[Fe-S] cluster scaffold protein carrying a second [4Fe-4S](2+) cluster] + N(6)-octanoyl-L-lysyl-[protein] + 2 oxidized [2Fe-2S]-[ferredoxin] + 2 S-adenosyl-L-methionine + 4 H(+) = [[Fe-S] cluster scaffold protein] + N(6)-[(R)-dihydrolipoyl]-L-lysyl-[protein] + 4 Fe(3+) + 2 hydrogen sulfide + 2 5'-deoxyadenosine + 2 L-methionine + 2 reduced [2Fe-2S]-[ferredoxin]. The protein operates within protein modification; protein lipoylation via endogenous pathway; protein N(6)-(lipoyl)lysine from octanoyl-[acyl-carrier-protein]: step 2/2. Functionally, catalyzes the radical-mediated insertion of two sulfur atoms into the C-6 and C-8 positions of the octanoyl moiety bound to the lipoyl domains of lipoate-dependent enzymes, thereby converting the octanoylated domains into lipoylated derivatives. This is Lipoyl synthase from Rhodopirellula baltica (strain DSM 10527 / NCIMB 13988 / SH1).